A 173-amino-acid chain; its full sequence is Large ribosomal subunit protein uL10 (173 aa).

The protein belongs to the universal ribosomal protein uL10 family. As to quaternary structure, part of the ribosomal stalk of the 50S ribosomal subunit. The N-terminus interacts with L11 and the large rRNA to form the base of the stalk. The C-terminus forms an elongated spine to which L12 dimers bind in a sequential fashion forming a multimeric L10(L12)X complex.

In terms of biological role, forms part of the ribosomal stalk, playing a central role in the interaction of the ribosome with GTP-bound translation factors. In Corynebacterium aurimucosum (strain ATCC 700975 / DSM 44827 / CIP 107346 / CN-1) (Corynebacterium nigricans), this protein is Large ribosomal subunit protein uL10.